A 123-amino-acid polypeptide reads, in one-letter code: Large ribosomal subunit protein uL14 (123 aa).

This sequence belongs to the universal ribosomal protein uL14 family. As to quaternary structure, part of the 50S ribosomal subunit. Forms a cluster with proteins L3 and L19. In the 70S ribosome, L14 and L19 interact and together make contacts with the 16S rRNA in bridges B5 and B8.

Functionally, binds to 23S rRNA. Forms part of two intersubunit bridges in the 70S ribosome. The protein is Large ribosomal subunit protein uL14 of Blochmanniella pennsylvanica (strain BPEN).